Here is a 417-residue protein sequence, read N- to C-terminus: Gamma-glutamyl phosphate reductase (417 aa).

The protein belongs to the gamma-glutamyl phosphate reductase family.

It localises to the cytoplasm. The enzyme catalyses L-glutamate 5-semialdehyde + phosphate + NADP(+) = L-glutamyl 5-phosphate + NADPH + H(+). It participates in amino-acid biosynthesis; L-proline biosynthesis; L-glutamate 5-semialdehyde from L-glutamate: step 2/2. Catalyzes the NADPH-dependent reduction of L-glutamate 5-phosphate into L-glutamate 5-semialdehyde and phosphate. The product spontaneously undergoes cyclization to form 1-pyrroline-5-carboxylate. The protein is Gamma-glutamyl phosphate reductase of Escherichia coli (strain K12 / MC4100 / BW2952).